Reading from the N-terminus, the 138-residue chain is MLIPKRVKYRRQHRPTRRGVSKGGNRVTFGDYGVQALEPAYITNRQIEAARIAINRHVKRGGKVWINIFPDRPLTQKPLGVRMGSGKGPVEKWIANVKPGRILFEMSYPSEEVALEALRRAGAKLPCKVRIVKKEDQF.

The protein belongs to the universal ribosomal protein uL16 family. In terms of assembly, part of the 50S ribosomal subunit.

Functionally, binds 23S rRNA and is also seen to make contacts with the A and possibly P site tRNAs. The sequence is that of Large ribosomal subunit protein uL16 from Corynebacterium kroppenstedtii (strain DSM 44385 / JCM 11950 / CIP 105744 / CCUG 35717).